A 345-amino-acid polypeptide reads, in one-letter code: AP2-like ethylene-responsive transcription factor At1g16060 (345 aa).

Residues 15–62 form a disordered region; that stretch reads TRQSKKTSVENETGDDQSATSVVLKAKRKRRSQPRDAPPQRSSVHRGV. 2 consecutive DNA-binding regions (AP2/ERF) follow at residues 58-124 and 160-218; these read VHRG…LNFP and KYRG…TNFD. Positions 243–302 are disordered; sequence HSDLSPFIKPNHESDLSQSQSSSEDNDDRKTKLLKSSPLVAEEVIGPSTPPEIAPPRRSF.

The protein belongs to the AP2/ERF transcription factor family. AP2 subfamily.

It localises to the nucleus. Functionally, probably acts as a transcriptional activator. Binds to the GCC-box pathogenesis-related promoter element. May be involved in the regulation of gene expression by stress factors and by components of stress signal transduction pathways. This Arabidopsis thaliana (Mouse-ear cress) protein is AP2-like ethylene-responsive transcription factor At1g16060.